The chain runs to 421 residues: ATP-dependent RNA helicase RhlB (421 aa).

Positions 9 to 37 (QKFSDFALHAKVIEALENKGFHYCTPIQA) match the Q motif motif. The region spanning 40-219 (LPLTLAGRDV…FEQMNNAEYV (180 aa)) is the Helicase ATP-binding domain. ATP is bound at residue 53–60 (AQTGTGKT). The short motif at 165–168 (DEAD) is the DEAD box element. One can recognise a Helicase C-terminal domain in the interval 245 to 390 (RLLQTLIEEE…QSKYNPDALL (146 aa)). The tract at residues 386 to 421 (PDALLSELPPPKRLTRARSGNGPRRTGAPRNRRRPG) is disordered. Low complexity predominate over residues 405–414 (GNGPRRTGAP).

Belongs to the DEAD box helicase family. RhlB subfamily. Component of the RNA degradosome, which is a multiprotein complex involved in RNA processing and mRNA degradation.

Its subcellular location is the cytoplasm. It carries out the reaction ATP + H2O = ADP + phosphate + H(+). Its function is as follows. DEAD-box RNA helicase involved in RNA degradation. Has RNA-dependent ATPase activity and unwinds double-stranded RNA. This Enterobacter sp. (strain 638) protein is ATP-dependent RNA helicase RhlB.